The sequence spans 165 residues: uncharacterized protein (165 aa).

Residues M1–F17 form the signal peptide.

This is an uncharacterized protein from Aquifex aeolicus (strain VF5).